A 320-amino-acid polypeptide reads, in one-letter code: Sliding-clamp-loader large subunit (320 aa).

Residues 12–15, Ile-24, 53–58, and Arg-205 each bind ATP; these read EQKY and GTGKTT.

Belongs to the Tevenvirinae sliding-clamp-loader large subunit family. The sliding-clamp-loader consists of 4 large subunits and 1 small subunit. Interacts with the sliding clamp; this interaction allows the sliding-clamp-loader to open the sliding clamp. Part of the replicase complex that includes the DNA polymerase, the polymerase clamp, the clamp loader complex, the single-stranded DNA binding protein, the primase, the helicase and the helicase assembly factor.

In terms of biological role, forms the sliding-clamp-loader together with the small subunit. Functions as an ATPase enzyme. The clamp loader holds the clamp in an open conformation and places it onto the DNA. 4 ATP molecules must bind to the sliding-clamp-loader before the latter can open the sliding clamp. ATP hydrolysis triggers the detachment of the sliding clamp from the sliding-clamp-loader, freeing the sliding clamp to track along DNA. In Escherichia phage RB69 (Bacteriophage RB69), this protein is Sliding-clamp-loader large subunit (44).